The chain runs to 379 residues: Ribosomal RNA large subunit methyltransferase G (379 aa).

It belongs to the methyltransferase superfamily. RlmG family.

It localises to the cytoplasm. It carries out the reaction guanosine(1835) in 23S rRNA + S-adenosyl-L-methionine = N(2)-methylguanosine(1835) in 23S rRNA + S-adenosyl-L-homocysteine + H(+). Specifically methylates the guanine in position 1835 (m2G1835) of 23S rRNA. The protein is Ribosomal RNA large subunit methyltransferase G of Pectobacterium atrosepticum (strain SCRI 1043 / ATCC BAA-672) (Erwinia carotovora subsp. atroseptica).